Consider the following 258-residue polypeptide: Phosphate import ATP-binding protein PstB (258 aa).

The 242-residue stretch at 12-253 folds into the ABC transporter domain; that stretch reads IQVHNLNFYY…PKMKQTEDYI (242 aa). 44–51 contributes to the ATP binding site; the sequence is GPSGCGKS.

This sequence belongs to the ABC transporter superfamily. Phosphate importer (TC 3.A.1.7) family. As to quaternary structure, the complex is composed of two ATP-binding proteins (PstB), two transmembrane proteins (PstC and PstA) and a solute-binding protein (PstS).

The protein localises to the cell inner membrane. It catalyses the reaction phosphate(out) + ATP + H2O = ADP + 2 phosphate(in) + H(+). In terms of biological role, part of the ABC transporter complex PstSACB involved in phosphate import. Responsible for energy coupling to the transport system. In Photorhabdus laumondii subsp. laumondii (strain DSM 15139 / CIP 105565 / TT01) (Photorhabdus luminescens subsp. laumondii), this protein is Phosphate import ATP-binding protein PstB.